Consider the following 251-residue polypeptide: Hydroxyacylglutathione hydrolase (251 aa).

The Zn(2+) site is built by H53, H55, D57, H58, H110, D127, and H165.

It belongs to the metallo-beta-lactamase superfamily. Glyoxalase II family. Monomer. Requires Zn(2+) as cofactor.

The catalysed reaction is an S-(2-hydroxyacyl)glutathione + H2O = a 2-hydroxy carboxylate + glutathione + H(+). The protein operates within secondary metabolite metabolism; methylglyoxal degradation; (R)-lactate from methylglyoxal: step 2/2. In terms of biological role, thiolesterase that catalyzes the hydrolysis of S-D-lactoyl-glutathione to form glutathione and D-lactic acid. The chain is Hydroxyacylglutathione hydrolase from Serratia proteamaculans (strain 568).